We begin with the raw amino-acid sequence, 65 residues long: Disintegrin CC8A (65 aa).

In terms of domain architecture, Disintegrin spans 1-65 (MNSAHPCCDP…SDCPRNRIKK (65 aa)). 4 cysteine pairs are disulfide-bonded: C7-C30, C21-C27, C26-C51, and C39-C58. The Cell attachment site signature appears at 43 to 45 (RGD).

This sequence belongs to the disintegrin family. Dimeric disintegrin subfamily. Heterodimer with CC8B; disulfide-linked. As to expression, expressed by the venom gland.

Its subcellular location is the secreted. Functionally, inhibits integrins alpha-IIb/beta-3 (ITGA2B/ITGB3), alpha-V/beta-3 (ITGAV/ITGB3), and alpha-5/beta-1 (ITGA5/ITGB1). In Cerastes cerastes (Horned desert viper), this protein is Disintegrin CC8A.